The primary structure comprises 103 residues: Histone H4 type VIII (103 aa).

A compositionally biased stretch (gly residues) spans 1–14; sequence MSGRGKGGKGLGKG. A disordered region spans residues 1–20; it reads MSGRGKGGKGLGKGGAKRHR. Ser-2 carries the post-translational modification N-acetylserine. Position 2 is a phosphoserine (Ser-2). Arg-4 is subject to Asymmetric dimethylarginine; by PRMT1; alternate. Arg-4 is subject to Citrulline; alternate. Arg-4 is modified (omega-N-methylarginine; by PRMT1; alternate). Arg-4 carries the post-translational modification Symmetric dimethylarginine; by PRMT5 and PRMT7; alternate. N6-(2-hydroxyisobutyryl)lysine; alternate occurs at positions 6, 9, 13, and 17. An N6-acetyl-N6-methyllysine; alternate modification is found at Lys-6. 4 positions are modified to N6-acetyllysine: Lys-6, Lys-9, Lys-13, and Lys-17. N6-butyryllysine; alternate is present on residues Lys-6, Lys-9, Lys-13, and Lys-17. Lys-6 is subject to N6-glutaryllysine; alternate. An N6-lactoyllysine; alternate mark is found at Lys-6, Lys-9, Lys-13, and Lys-17. At Lys-9 the chain carries N6-propionyllysine; alternate. Lys-13 is modified (N6-acetyl-N6-methyllysine; alternate). Position 13 is an N6-glutaryllysine; alternate (Lys-13). Lys-13 carries the N6-methyllysine; alternate modification. N6-propionyllysine; alternate is present on Lys-17. The residue at position 21 (Lys-21) is an N6-methyllysine; alternate. Position 21 is an N6,N6,N6-trimethyllysine; alternate (Lys-21). At Lys-21 the chain carries N6,N6-dimethyllysine; alternate. An N6-(2-hydroxyisobutyryl)lysine; alternate mark is found at Lys-32 and Lys-45. Position 32 is an N6-acetyllysine (Lys-32). An N6-butyryllysine; alternate mark is found at Lys-32 and Lys-45. An N6-glutaryllysine; alternate modification is found at Lys-32. At Lys-32 the chain carries N6-lactoyllysine; alternate. An N6-propionyllysine; alternate mark is found at Lys-32 and Lys-45. Lys-32 carries the N6-succinyllysine; alternate modification. Lys-32 is covalently cross-linked (Glycyl lysine isopeptide (Lys-Gly) (interchain with G-Cter in UFM1); alternate). Ser-48 is modified (phosphoserine). Phosphotyrosine is present on Tyr-52. An N6-acetyllysine modification is found at Lys-60. N6-glutaryllysine; alternate occurs at positions 60, 78, and 80. Position 60 is an N6-(2-hydroxyisobutyryl)lysine (Lys-60). An N6-(2-hydroxyisobutyryl)lysine; alternate mark is found at Lys-78 and Lys-80. N6-butyryllysine; alternate occurs at positions 78 and 80. Lys-78 carries the N6-lactoyllysine; alternate modification. Lys-78 and Lys-80 each carry N6-propionyllysine; alternate. At Lys-78 the chain carries N6-succinyllysine. Lys-80 is modified (N6-acetyllysine). Tyr-89 bears the Phosphotyrosine mark. Lys-92 is modified (N6-(2-hydroxyisobutyryl)lysine; alternate). Lys-92 bears the N6-butyryllysine; alternate mark. N6-glutaryllysine; alternate is present on Lys-92. Lys-92 carries the N6-lactoyllysine; alternate modification. Residue Lys-92 is modified to N6-propionyllysine; alternate. The residue at position 92 (Lys-92) is an N6-succinyllysine; alternate. Lys-92 carries the N6-acetyllysine; alternate modification. Residue Lys-92 forms a Glycyl lysine isopeptide (Lys-Gly) (interchain with G-Cter in ubiquitin); alternate linkage.

Belongs to the histone H4 family. In terms of assembly, the nucleosome is a histone octamer containing two molecules each of H2A, H2B, H3 and H4 assembled in one H3-H4 heterotetramer and two H2A-H2B heterodimers. The octamer wraps approximately 147 bp of DNA. Acetylation at Lys-6 (H4K5ac), Lys-9 (H4K8ac), Lys-13 (H4K12ac) and Lys-17 (H4K16ac) occurs in coding regions of the genome but not in heterochromatin. In terms of processing, citrullination at Arg-4 (H4R3ci) by PADI4 impairs methylation. Post-translationally, monomethylation and asymmetric dimethylation at Arg-4 (H4R3me1 and H4R3me2a, respectively) by PRMT1 favors acetylation at Lys-9 (H4K8ac) and Lys-13 (H4K12ac). Demethylation is performed by JMJD6. Symmetric dimethylation on Arg-4 (H4R3me2s) by the PRDM1/PRMT5 complex may play a crucial role in the germ-cell lineage. Monomethylated, dimethylated or trimethylated at Lys-21 (H4K20me1, H4K20me2, H4K20me3). Monomethylation is performed by KMT5A/SET8. Trimethylation is performed by KMT5B and KMT5C and induces gene silencing. Monomethylated at Lys-13 (H4K12me1) by N6AMT1; H4K12me1 modification is present at the promoters of numerous genes encoding cell cycle regulators. In terms of processing, acetyl-methylated at Lys-6 and Lys-13 (H4K5acme and H4K12acme, respectively), acetyl-methylation is an epigenetic mark of active chromatin associated with increased transcriptional initiation. Acetyl-methylation is formed by acetylation by EP300/p300 of lysine residues that are already monomethylated on the same side chain. H4K5acme and H4K12acme marks specifically bind BRD2. Post-translationally, ubiquitinated by the CUL4-DDB-RBX1 complex in response to ultraviolet irradiation. This may weaken the interaction between histones and DNA and facilitate DNA accessibility to repair proteins. Monoubiquitinated at Lys-92 of histone H4 (H4K91ub1) in response to DNA damage. The exact role of H4K91ub1 in DNA damage response is still unclear but it may function as a licensing signal for additional histone H4 post-translational modifications such as H4 Lys-21 methylation (H4K20me). Sumoylated, which is associated with transcriptional repression. In terms of processing, butyrylation of histones marks active promoters and competes with histone acetylation. Post-translationally, glutarylation at Lys-92 (H4K91glu) destabilizes nucleosomes by promoting dissociation of the H2A-H2B dimers from nucleosomes. Ufmylated; monofmylated by UFL1 at Lys-32 (H4K31Ufm1) in response to DNA damage. In terms of processing, lactylated in macrophages by EP300/P300 by using lactoyl-CoA directly derived from endogenous or exogenous lactate, leading to stimulates gene transcription. Delactylated by SIRT3 at Lys-17 (H4K16la).

The protein resides in the nucleus. The protein localises to the chromosome. Core component of nucleosome. Nucleosomes wrap and compact DNA into chromatin, limiting DNA accessibility to the cellular machineries which require DNA as a template. Histones thereby play a central role in transcription regulation, DNA repair, DNA replication and chromosomal stability. DNA accessibility is regulated via a complex set of post-translational modifications of histones, also called histone code, and nucleosome remodeling. This Gallus gallus (Chicken) protein is Histone H4 type VIII (H4-VIII).